A 454-amino-acid chain; its full sequence is UDP-glycosyltransferase 79A2 (454 aa).

Residues S269, 330 to 331, 348 to 356, and 370 to 373 contribute to the UDP-alpha-D-glucose site; these read WV, HAGYGSVIE, and KVDQ.

It belongs to the UDP-glycosyltransferase family.

May glycosylate diterpenes or flavonols in leaves. The chain is UDP-glycosyltransferase 79A2 from Stevia rebaudiana (Stevia).